Here is a 131-residue protein sequence, read N- to C-terminus: Small ribosomal subunit protein uS8 (131 aa).

It belongs to the universal ribosomal protein uS8 family. Part of the 30S ribosomal subunit. Contacts proteins S5 and S12.

In terms of biological role, one of the primary rRNA binding proteins, it binds directly to 16S rRNA central domain where it helps coordinate assembly of the platform of the 30S subunit. The polypeptide is Small ribosomal subunit protein uS8 (Albidiferax ferrireducens (strain ATCC BAA-621 / DSM 15236 / T118) (Rhodoferax ferrireducens)).